Here is a 211-residue protein sequence, read N- to C-terminus: Ribosomal RNA small subunit methyltransferase G (211 aa).

S-adenosyl-L-methionine contacts are provided by residues G72, F77, 125-126, and R141; that span reads IE.

The protein belongs to the methyltransferase superfamily. RNA methyltransferase RsmG family.

It localises to the cytoplasm. The enzyme catalyses guanosine(527) in 16S rRNA + S-adenosyl-L-methionine = N(7)-methylguanosine(527) in 16S rRNA + S-adenosyl-L-homocysteine. Functionally, specifically methylates the N7 position of guanine in position 527 of 16S rRNA. This Allorhizobium ampelinum (strain ATCC BAA-846 / DSM 112012 / S4) (Agrobacterium vitis (strain S4)) protein is Ribosomal RNA small subunit methyltransferase G.